Consider the following 309-residue polypeptide: Mas-related G-protein coupled receptor member E (309 aa).

The Extracellular portion of the chain corresponds to 1-21 (MSLRVHTHSPSTQGDMAFNLT). N-linked (GlcNAc...) asparagine glycosylation occurs at asparagine 19. The chain crosses the membrane as a helical span at residues 22–42 (ILSLTELLSLGGLLGNGVALW). The Cytoplasmic segment spans residues 43 to 59 (LLNQNVYRNPFSIYLLD). A helical membrane pass occupies residues 60-80 (VACADLIFLCCHMVAIIPELL). The Extracellular segment spans residues 81–91 (QDQLNFPEFVH). A helical transmembrane segment spans residues 92–112 (ISLIMLRFFCYIVGLSLLVAI). Residues 113–132 (STEQCLATLFPSGYLCRRPR) lie on the Cytoplasmic side of the membrane. Residues 133–153 (YLTTCVCAFIWVLCLLLDLLL) traverse the membrane as a helical segment. Residues 154–168 (SGACTQFFGAPSYHL) lie on the Extracellular side of the membrane. The chain crosses the membrane as a helical span at residues 169–189 (CGMLWLVVAVLLAALCCTMCV). The Cytoplasmic segment spans residues 190 to 212 (TSLLLLLRVERGPERHQPRGFPT). Residues 213–233 (LVLLVILLFLFCGLPFGIFWL) traverse the membrane as a helical segment. Residues 234 to 247 (SKNLSWHTPLYFYH) lie on the Extracellular side of the membrane. The N-linked (GlcNAc...) asparagine glycan is linked to asparagine 236. The helical transmembrane segment at 248–268 (FSFFMASVHSAAKPAIYFFLG) threads the bilayer. Topologically, residues 269 to 309 (STPGQRFQEPLRLVLQRALGDEAELGAVREASQGGLVDMTV) are cytoplasmic.

It belongs to the G-protein coupled receptor 1 family. Mas subfamily.

The protein resides in the cell membrane. Functionally, orphan receptor. May regulate nociceptor function and/or development, including the sensation or modulation of pain. The chain is Mas-related G-protein coupled receptor member E (Mrgpre) from Rattus norvegicus (Rat).